We begin with the raw amino-acid sequence, 108 residues long: Small ribosomal subunit protein eS25x (108 aa).

The segment at 1–36 is disordered; that stretch reads MAPKKDKVPPPSSKPAKSGGGKQKKKKWSKGKQKEK. Residues 22-31 are compositionally biased toward basic residues; that stretch reads KQKKKKWSKG.

The protein belongs to the eukaryotic ribosomal protein eS25 family.

The sequence is that of Small ribosomal subunit protein eS25x (RPS25D) from Arabidopsis thaliana (Mouse-ear cress).